Reading from the N-terminus, the 81-residue chain is Sec-independent protein translocase protein TatA (81 aa).

A helical transmembrane segment spans residues 1–21; the sequence is MGGLQPWHWVIVIAVFVLLFG. Positions 46-56 are enriched in basic and acidic residues; that stretch reads MQAESKGDEPK. The segment at 46–81 is disordered; sequence MQAESKGDEPKPATPIASERVDTTAPEQQSTDRHTA.

It belongs to the TatA/E family. The Tat system comprises two distinct complexes: a TatABC complex, containing multiple copies of TatA, TatB and TatC subunits, and a separate TatA complex, containing only TatA subunits. Substrates initially bind to the TatABC complex, which probably triggers association of the separate TatA complex to form the active translocon.

Its subcellular location is the cell membrane. Part of the twin-arginine translocation (Tat) system that transports large folded proteins containing a characteristic twin-arginine motif in their signal peptide across membranes. TatA could form the protein-conducting channel of the Tat system. The sequence is that of Sec-independent protein translocase protein TatA from Mycolicibacterium smegmatis (strain ATCC 700084 / mc(2)155) (Mycobacterium smegmatis).